The following is a 458-amino-acid chain: Sensor histidine kinase ZraS (458 aa).

The Cytoplasmic segment spans residues 1 to 14 (MRFMQRSKDSLAKW). The chain crosses the membrane as a helical span at residues 15-35 (LSAILPVVIVGLVGLFAVTVI). At 36 to 194 (RDYGRETAAA…SAEDREQRNT (159 aa)) the chain is on the periplasmic side. The helical transmembrane segment at 195–215 (LIILFALATVLLASVLSFFWY) threads the bilayer. At 216 to 458 (RRYLRSRQLL…VNITRKDPQG (243 aa)) the chain is on the cytoplasmic side. Positions 244-451 (GVAHEIRNPL…RFTLWLPVNI (208 aa)) constitute a Histidine kinase domain. His-247 carries the phosphohistidine; by autocatalysis modification.

In terms of processing, autophosphorylated.

The protein localises to the cell inner membrane. The catalysed reaction is ATP + protein L-histidine = ADP + protein N-phospho-L-histidine.. Activity of the ZraS/ZraR two-component system is repressed by the zinc-bound form of ZraP, which probably interacts with the periplasmic region of ZraS. Part of the Zra signaling pathway, an envelope stress response (ESR) system composed of the periplasmic accessory protein ZraP, the histidine kinase ZraS and the transcriptional regulator ZraR. The ZraPSR system contributes to antibiotic resistance and is important for membrane integrity in the presence of membrane-targeting biocides. ZraS is a member of the two-component regulatory system ZraS/ZraR. Functions as a membrane-associated sensor kinase that phosphorylates ZraR in response to high concentrations of Zn(2+) or Pb(2+) in the medium. The sequence is that of Sensor histidine kinase ZraS (zraS) from Escherichia coli O157:H7.